A 173-amino-acid polypeptide reads, in one-letter code: Ribulose bisphosphate carboxylase small subunit, chloroplastic 1 (173 aa).

The N-terminal 52 residues, 1 to 52 (MMVSTAAVARVRPAQTNMVGAFNGCRSSVAFPATRKANNDLSTLPSSGGRVS), are a transit peptide targeting the chloroplast.

Belongs to the RuBisCO small chain family. As to quaternary structure, heterohexadecamer of 8 large and 8 small subunits.

It localises to the plastid. Its subcellular location is the chloroplast. Its function is as follows. RuBisCO catalyzes two reactions: the carboxylation of D-ribulose 1,5-bisphosphate, the primary event in carbon dioxide fixation, as well as the oxidative fragmentation of the pentose substrate. Both reactions occur simultaneously and in competition at the same active site. Although the small subunit is not catalytic it is essential for maximal activity. The protein is Ribulose bisphosphate carboxylase small subunit, chloroplastic 1 of Lemna gibba (Swollen duckweed).